The primary structure comprises 410 residues: Mating-type locus allele B6 protein (410 aa).

Positions 1 to 110 are variable domain between B alleles; sequence MSRDPKLSLS…VNVASPAVEY (110 aa). Positions 107-184 form a DNA-binding region, homeobox; TALE-type; that stretch reads AVEYRNLSED…NARRRSGWSH (78 aa). Residues 111–410 are highly conserved between B alleles; that stretch reads RNLSEDLPAY…PFFCLSIAFV (300 aa). Disordered regions lie at residues 202-224, 278-335, and 373-393; these read RAKLSSSNQSTPPSLTSEKPSDD, TPKP…TPEL, and KARGNRKVKALPKRAGKQQPD. Positions 205–219 are enriched in polar residues; sequence LSSSNQSTPPSLTSE. Positions 276 to 308 match the Nuclear localization signal motif; that stretch reads KKTPKPGMPRPVTTVAKRQPARKTKPAAKPKSR. The span at 294 to 307 shows a compositional bias: basic residues; that stretch reads QPARKTKPAAKPKS. A compositionally biased stretch (polar residues) spans 312–335; that stretch reads PRASTTPSIDSTLDSSKLESTPEL. Residues 333–410 form a not essential for B6 function region; the sequence is PELSMCSTAD…PFFCLSIAFV (78 aa). A compositionally biased stretch (basic residues) spans 375–388; that stretch reads RGNRKVKALPKRAG.

It belongs to the TALE/M-ATYP homeobox family.

The protein localises to the nucleus. The B locus has at least 25 alleles, and any combination of two different B alleles yields a multimeric regulatory protein, that activates genes responsible for the pathogenicity and for the sexual development of the fungus within the corn plant. This chain is Mating-type locus allele B6 protein, found in Mycosarcoma maydis (Corn smut fungus).